The following is a 137-amino-acid chain: ATP synthase epsilon chain, chloroplastic (137 aa).

Belongs to the ATPase epsilon chain family. F-type ATPases have 2 components, CF(1) - the catalytic core - and CF(0) - the membrane proton channel. CF(1) has five subunits: alpha(3), beta(3), gamma(1), delta(1), epsilon(1). CF(0) has three main subunits: a, b and c.

The protein localises to the plastid. The protein resides in the chloroplast thylakoid membrane. Its function is as follows. Produces ATP from ADP in the presence of a proton gradient across the membrane. This chain is ATP synthase epsilon chain, chloroplastic, found in Hordeum vulgare (Barley).